The following is a 291-amino-acid chain: Glycine--tRNA ligase alpha subunit (291 aa).

It belongs to the class-II aminoacyl-tRNA synthetase family. In terms of assembly, tetramer of two alpha and two beta subunits.

It localises to the cytoplasm. It catalyses the reaction tRNA(Gly) + glycine + ATP = glycyl-tRNA(Gly) + AMP + diphosphate. The sequence is that of Glycine--tRNA ligase alpha subunit from Nitratidesulfovibrio vulgaris (strain DSM 19637 / Miyazaki F) (Desulfovibrio vulgaris).